A 187-amino-acid polypeptide reads, in one-letter code: ECF RNA polymerase sigma factor SigK (187 aa).

Positions 30-96 (YDHTKSRVYG…RAVDRVRCEQ (67 aa)) are sigma-70 factor domain-2. The Interaction with polymerase core subunit RpoC signature appears at 53-56 (ETTQ). The tract at residues 133-182 (CLKALTDTQRQCIELAYYGGLTYVEVSRRLAANLSTIKSRMRDALRSLRN) is sigma-70 factor domain-4. A DNA-binding region (H-T-H motif) is located at residues 155 to 174 (YVEVSRRLAANLSTIKSRMR).

It belongs to the sigma-70 factor family. ECF subfamily. Interacts transiently with the RNA polymerase catalytic core formed by RpoA, RpoB, RpoC and RpoZ (2 alpha, 1 beta, 1 beta' and 1 omega subunit) to form the RNA polymerase holoenzyme that can initiate transcription. Interacts (via sigma-70 factor domain 4) with anti-sigma-K factor RskA.

In terms of biological role, sigma factors are initiation factors that promote the attachment of RNA polymerase to specific initiation sites and are then released. Extracytoplasmic function (ECF) sigma factors are held in an inactive form by an anti-sigma factor until released by regulated intramembrane proteolysis. This Mycobacterium tuberculosis (strain ATCC 25177 / H37Ra) protein is ECF RNA polymerase sigma factor SigK (sigK).